The following is a 2378-amino-acid chain: MSVTQLKNLKHAIAQLLEWDGTKTARKKIVDEVVLLYHALGAEALSEDNQEIYDLYDLSARIFNLAKKEIEEANQQFEKERKKGTRRSEKPVPTPLFELSIQHLKRCCQQGIDHNQVPWIAYCLKLLEFPITITEKSIENEISNVLLLSSNASQLHWAEHAHLSSLWKWIWSRVETADIGALAMRNYMELAANLLENVDYVVFEKSPIDLMAKVMGTLKKSVEMGNPKEYWCHYRKFSVVHILSYIVHRWGLEARDFILREIFELTGSLSNLISVAHKDGEQSKKCIMRLIDDLVKLAMIETVHGHRTMNEVTRGNIQKLVKTGIQESLKSAHRNFSRSSTFSISEECVRYLTRWLLAERRLEQPSAAMNESFELTGDSSSKKKDDATFDSLIDLSFGSTISGKHKLNAWNGVMQILNELLKSRRLELQVTEKIVTILWEKRKSYTTEPLRTVFCSILSTVVCQADVRFGHRKVPTIDSILKYSLSLMPNVASLPSAAALTETIVRFRTVSREGLRNTWDTVSRTSSGSFEVVRLISALISVTEFDENSRFANDERVRSWSFRKDIIEWVLLDPNAHSHKLLYQLCQYHPTYCYESEASSSDDSLLQTLKLCKLACSPAPPSAPKALRPLEASIEEIVRYVHDKLKSILATEITLPAFVLCHEFALKYPDRSYEFNKMYKKLYQIMEDQEEDEFLQSARHFSKWPQNLTLPIQKQTINCMAVFFEANLDNQLVDLCQWSDRRKVLVEMLAELAATRSEIRDKLQKSMPFNKFVKECIMENRGDLYEMTKRFEKYSFLLSIRNLIVTRMIITNEAARLLGDGETISETDIFIIEKRTLSTCIRNVSEGKELSGYTLDPYTVAANVHNVHFDHINVEIYLELLKKSPFFAQNIVRHLLRQNGKEAEEETWHLHATVLKIVMKDEKLLAVCVATIPNMVRYLKVYQIHFSPKSNAAKFLHLDMESISHCQSYLRKPTKSSNLITAANFLTLFGCEKRTWKRPILRFWSIFKQQPAMCCEKLLIFAEECVELGLNHRIACLLRALTTSEFCRKALCDEYLKIAFQLTYRSIFLILSKNECRPEIVELCDDMNLRYDLLQHQIKHVAAHHLEHFERFETKIAFSVEKFLKSGIDGIDFEDLGLVEFYKQLNENLTEDAIRSNEARNIYIVDILSTIWLQLPSIRPQILPILARFKHISPAWTNFPQPPHISTNEKSFLQHLRFHLYLKMMNISKSMTQGEYATCIMMLLTSYDSSHFVADLIEKKQLGKLKLQQRRNVLCILSRLLKDQAVMGDEDETIIDPILFKAITKASAVFEDTAACIVPFLFKICVDFKGKYDKCVINLLGCLKGVNAEDEIVVRCLAECVDSIGLNVIARYERLNIETHSEFGVKWFFKLSRLFLKHGFTTHSFAIANILFDRLSARKRNTMMIDRTSLDRIDRSQELINLLVEIYVAEGNSVALSSLPPAVQNRPDVRQVMNKSSKEWLKLLSSNQMDSWELTIVQWMCGIQFNAITGDKYLNSILRCNFNEYTKKIDSPLKFVYFQLFHLSTSTLEIEEAISSMPLAPTIDQMRLMIIANATASFEPQSVEEHVVRAVRELRETSNRRKSGGNVKGINEKTTRMVKLAEMLTENKAYDAAINLLDTWEHECLQWTSVAAESIDIDLIRICKQHVTCRSGDPRMADINLRTMHPRVPVMSDLAIAEWSLALSKITIEYRNDMEEGIRILEFGCKHLQNKDSVETRLKVLLKLHSVCIGQLSKLEEYRETRTYRMKQQAVTAFEQQIQNSCRTSLARGNSGDEWTKKTVQRVRKEHQFEKNDLEKVDNSLNSAARKAVSSGFDALLCISQLEDDDEAIRASSLIIFPLIDVIYKYETDVGVIALLKEHTKSKLPSKLWISATSHIASKCFSIEKSQITRHLSQILCHLIYDYPYHVLHTILMYDDEKNASKVKGFLKTIFDARADQRDSSKLKEIVITIREAHQAYREIAMLDVRGNVRIQRVEINGKTMYRWPHDLKIFKCKLRQLPIPTISQKIGCPGDYSTTDLITWKRWKDVFTIADGISTPKIWEIEGSDGKWYKTVWKKDDVRQDVLVEQMFDVTNNMLEKAMLRTYNVVPLDTECGVIEFCGGTVSLKEVMCGVTREGGLHREFNSEEVSASKVSSMMRQVQTESTETRRQVFVEICQQYSPVFRHFFYTNFSTAQIWRQKIINYRQSLATWSIVCYIVGLGDRHASNILFDQKLCTFVHIDLGMILEYSKRTLPVPEQVPFRITRDVLDPILIEGIENGQLAEECTQIMEKLKENGKVILGVASALLRETMTNFREAEQAAGRPSYISEMAIGRLREKLRGTDDGVTAQSSNLQIRRLLREATSADNLSRMFCGWMPFL.

The 523-residue stretch at 1415–1937 (LSARKRNTMM…LHTILMYDDE (523 aa)) folds into the FAT domain. A PI3K/PI4K catalytic domain is found at 2044 to 2366 (WKDVFTIADG…LLREATSADN (323 aa)). The interval 2050–2056 (IADGIST) is G-loop. A catalytic loop region spans residues 2218-2226 (GLGDRHASN). The tract at residues 2238–2263 (HIDLGMILEYSKRTLPVPEQVPFRIT) is activation loop. The FATC domain maps to 2346–2378 (TAQSSNLQIRRLLREATSADNLSRMFCGWMPFL).

It belongs to the PI3/PI4-kinase family. ATM subfamily.

The protein localises to the nucleus. The catalysed reaction is L-seryl-[protein] + ATP = O-phospho-L-seryl-[protein] + ADP + H(+). The enzyme catalyses L-threonyl-[protein] + ATP = O-phospho-L-threonyl-[protein] + ADP + H(+). Serine/threonine protein kinase which activates checkpoint signaling in the presence of DNA double strand breaks (DSBs) and other forms of DNA damage induced by ionizing radiation and other genotoxic stresses such as UV. Plays a role in maintaining genome stability. This Caenorhabditis elegans protein is Serine/threonine-protein kinase ATM (atm-1).